A 1398-amino-acid polypeptide reads, in one-letter code: DNA-directed RNA polymerase subunit beta' (1398 aa).

4 residues coordinate Zn(2+): Cys70, Cys72, Cys85, and Cys88. Positions 460, 462, and 464 each coordinate Mg(2+). Zn(2+)-binding residues include Cys814, Cys888, Cys895, and Cys898.

This sequence belongs to the RNA polymerase beta' chain family. As to quaternary structure, the RNAP catalytic core consists of 2 alpha, 1 beta, 1 beta' and 1 omega subunit. When a sigma factor is associated with the core the holoenzyme is formed, which can initiate transcription. Mg(2+) serves as cofactor. It depends on Zn(2+) as a cofactor.

It catalyses the reaction RNA(n) + a ribonucleoside 5'-triphosphate = RNA(n+1) + diphosphate. Functionally, DNA-dependent RNA polymerase catalyzes the transcription of DNA into RNA using the four ribonucleoside triphosphates as substrates. This chain is DNA-directed RNA polymerase subunit beta', found in Pseudomonas putida (Arthrobacter siderocapsulatus).